The sequence spans 120 residues: NAD(P)H-quinone oxidoreductase subunit 3 (120 aa).

3 helical membrane passes run 6-26 (GYDAFLGFLLIAAAVPVLALV), 64-84 (MFALVFVIFDVETVFLYPWAV), and 89-109 (LGLLAFIEALIFIAILLVALA).

Belongs to the complex I subunit 3 family. As to quaternary structure, NDH-1 can be composed of about 15 different subunits; different subcomplexes with different compositions have been identified which probably have different functions.

It localises to the cellular thylakoid membrane. The catalysed reaction is a plastoquinone + NADH + (n+1) H(+)(in) = a plastoquinol + NAD(+) + n H(+)(out). It catalyses the reaction a plastoquinone + NADPH + (n+1) H(+)(in) = a plastoquinol + NADP(+) + n H(+)(out). NDH-1 shuttles electrons from an unknown electron donor, via FMN and iron-sulfur (Fe-S) centers, to quinones in the respiratory and/or the photosynthetic chain. The immediate electron acceptor for the enzyme in this species is believed to be plastoquinone. Couples the redox reaction to proton translocation, and thus conserves the redox energy in a proton gradient. Cyanobacterial NDH-1 also plays a role in inorganic carbon-concentration. The protein is NAD(P)H-quinone oxidoreductase subunit 3 of Synechococcus sp. (strain CC9605).